Consider the following 411-residue polypeptide: Glutamate dehydrogenase (411 aa).

Residue lysine 102 is part of the active site.

It belongs to the Glu/Leu/Phe/Val dehydrogenases family.

The enzyme catalyses L-glutamate + NAD(+) + H2O = 2-oxoglutarate + NH4(+) + NADH + H(+). It carries out the reaction L-glutamate + NADP(+) + H2O = 2-oxoglutarate + NH4(+) + NADPH + H(+). The sequence is that of Glutamate dehydrogenase (GDH) from Vitis vinifera (Grape).